A 172-amino-acid chain; its full sequence is Mitochondrial import inner membrane translocase subunit Tim17-B (172 aa).

An intrachain disulfide couples Cys-9 to Cys-78. 3 helical membrane-spanning segments follow: residues Cys-17 to Phe-37, Gln-61 to Asp-77, and Val-113 to Leu-133. The disordered stretch occupies residues Pro-146 to His-172.

Belongs to the Tim17/Tim22/Tim23 family. Component of the TIM23 complex at least composed of TIMM23, TIMM17 (TIMM17A or TIMM17B) and TIMM50. The complex interacts with the TIMM44 component of the PAM complex and with DNAJC15. Post-translationally, forms one disulfide bond. As to expression, expression is abundant in heart and skeletal muscle, intermediate in brain, and weak in pancreas, placenta, kidney and liver.

It is found in the mitochondrion inner membrane. Its function is as follows. Essential component of the TIM23 complex, a complex that mediates the translocation of transit peptide-containing proteins across the mitochondrial inner membrane. In Homo sapiens (Human), this protein is Mitochondrial import inner membrane translocase subunit Tim17-B (TIMM17B).